Reading from the N-terminus, the 96-residue chain is Co-chaperonin GroES (96 aa).

The protein belongs to the GroES chaperonin family. As to quaternary structure, heptamer of 7 subunits arranged in a ring. Interacts with the chaperonin GroEL.

The protein resides in the cytoplasm. Together with the chaperonin GroEL, plays an essential role in assisting protein folding. The GroEL-GroES system forms a nano-cage that allows encapsulation of the non-native substrate proteins and provides a physical environment optimized to promote and accelerate protein folding. GroES binds to the apical surface of the GroEL ring, thereby capping the opening of the GroEL channel. This Albidiferax ferrireducens (strain ATCC BAA-621 / DSM 15236 / T118) (Rhodoferax ferrireducens) protein is Co-chaperonin GroES.